Reading from the N-terminus, the 170-residue chain is Neurotensin/neuromedin N (170 aa).

Positions 1-23 are cleaved as a signal peptide; that stretch reads MMAGMKIQLVCMILLAFSSWSLC.

It belongs to the neurotensin family. As to quaternary structure, interacts with NTSR1. Interacts with SORT1. Interacts with SORL1. In terms of processing, neurotensin is cleaved and degraded by Angiotensin-converting enzyme (ACE) and neprilysin (MME).

The protein resides in the secreted. Its subcellular location is the cytoplasmic vesicle. It localises to the secretory vesicle. Neurotensin may play an endocrine or paracrine role in the regulation of fat metabolism. It causes contraction of smooth muscle. This Canis lupus familiaris (Dog) protein is Neurotensin/neuromedin N (NTS).